The primary structure comprises 148 residues: Probable calcium-binding protein CML7 (148 aa).

3 consecutive EF-hand domains span residues Glu-9–Asn-44, Pro-80–Lys-115, and Leu-116–Lys-148. Residues Asp-22, Asp-24, Asp-26, Arg-28, Glu-33, Asp-93, Asp-95, Ser-97, Thr-99, and Asp-104 each contribute to the Ca(2+) site.

In terms of biological role, potential calcium sensor. The protein is Probable calcium-binding protein CML7 (CML7) of Oryza sativa subsp. japonica (Rice).